Consider the following 197-residue polypeptide: Imidazoleglycerol-phosphate dehydratase (197 aa).

This sequence belongs to the imidazoleglycerol-phosphate dehydratase family.

It is found in the cytoplasm. It carries out the reaction D-erythro-1-(imidazol-4-yl)glycerol 3-phosphate = 3-(imidazol-4-yl)-2-oxopropyl phosphate + H2O. Its pathway is amino-acid biosynthesis; L-histidine biosynthesis; L-histidine from 5-phospho-alpha-D-ribose 1-diphosphate: step 6/9. The protein is Imidazoleglycerol-phosphate dehydratase of Streptomyces avermitilis (strain ATCC 31267 / DSM 46492 / JCM 5070 / NBRC 14893 / NCIMB 12804 / NRRL 8165 / MA-4680).